The primary structure comprises 332 residues: UDP-N-acetylenolpyruvoylglucosamine reductase (332 aa).

Residues 15-184 (IDVSAACFLE…TYVSFRLSKR (170 aa)) form the FAD-binding PCMH-type domain. Arginine 160 is a catalytic residue. The Proton donor role is filled by serine 232. Glutamate 328 is a catalytic residue.

This sequence belongs to the MurB family. FAD serves as cofactor.

The protein localises to the cytoplasm. The catalysed reaction is UDP-N-acetyl-alpha-D-muramate + NADP(+) = UDP-N-acetyl-3-O-(1-carboxyvinyl)-alpha-D-glucosamine + NADPH + H(+). It functions in the pathway cell wall biogenesis; peptidoglycan biosynthesis. Cell wall formation. This Bacteroides fragilis (strain YCH46) protein is UDP-N-acetylenolpyruvoylglucosamine reductase.